The sequence spans 251 residues: Astacin (251 aa).

The N-terminal stretch at 1-15 (MQCAVLLVLLGVVAA) is a signal peptide. Positions 16–49 (SPIIPEAARALYYNDGMFEGDIKLRAGRQPARVG) are cleaved as a propeptide — activation peptide. A Peptidase M12A domain is found at 50-248 (AAILGDEYLW…INNLYTNECS (199 aa)). 2 disulfides stabilise this stretch: cysteine 91–cysteine 247 and cysteine 113–cysteine 133. Histidine 141 lines the Zn(2+) pocket. Glutamate 142 is a catalytic residue. Residues histidine 145 and histidine 151 each contribute to the Zn(2+) site. Residues 250 to 251 (RH) constitute a propeptide that is removed on maturation.

As to quaternary structure, monomer. The cofactor is Zn(2+).

The enzyme catalyses Hydrolysis of peptide bonds in substrates containing five or more amino acids, preferentially with Ala in P1', and Pro in P2'.. Its function is as follows. Metalloprotease. This protease prefers to cleave in front of small aliphatic residues (P1'). The presence of Lys or Arg in the P1 and P2 position yields high-turnover substrates. In the P3 position the enzyme prefers Pro &gt; Val &gt; Leu &gt; Ala &gt; Gly. This is Astacin from Astacus astacus (Noble crayfish).